Consider the following 628-residue polypeptide: 1-deoxy-D-xylulose-5-phosphate synthase (628 aa).

Thiamine diphosphate is bound by residues H72 and 113–115 (GHS). D144 lines the Mg(2+) pocket. Residues 145–146 (GA), N173, Y284, and E366 contribute to the thiamine diphosphate site. N173 lines the Mg(2+) pocket.

It belongs to the transketolase family. DXPS subfamily. As to quaternary structure, homodimer. Requires Mg(2+) as cofactor. Thiamine diphosphate is required as a cofactor.

The catalysed reaction is D-glyceraldehyde 3-phosphate + pyruvate + H(+) = 1-deoxy-D-xylulose 5-phosphate + CO2. It functions in the pathway metabolic intermediate biosynthesis; 1-deoxy-D-xylulose 5-phosphate biosynthesis; 1-deoxy-D-xylulose 5-phosphate from D-glyceraldehyde 3-phosphate and pyruvate: step 1/1. Functionally, catalyzes the acyloin condensation reaction between C atoms 2 and 3 of pyruvate and glyceraldehyde 3-phosphate to yield 1-deoxy-D-xylulose-5-phosphate (DXP). The sequence is that of 1-deoxy-D-xylulose-5-phosphate synthase from Shouchella clausii (strain KSM-K16) (Alkalihalobacillus clausii).